Here is a 105-residue protein sequence, read N- to C-terminus: Circadian clock oscillator protein KaiB (105 aa).

This sequence belongs to the KaiB family. As to quaternary structure, the KaiABC complex composition changes during the circadian cycle to control KaiC phosphorylation. Complexes KaiC(6), KaiA(2-4):KaiC(6), KaiB(6):KaiC(6) and KaiC(6):KaiB(6):KaiA(12) are among the most important forms, many form cooperatively. Undergoes a major conformational rearrangment; in the free state forms homotetramers as a dimer of dimers. When bound to the CI domain of KaiC switches to a monomeric thioredoxin-fold (KaiB(fs)). KaiB(fs) binds CikA, leading it to dephosphorylate phospho-RpaA.

Key component of the KaiABC oscillator complex, which constitutes the main circadian regulator in cyanobacteria. Complex composition changes during the circadian cycle to control KaiC phosphorylation. KaiA stimulates KaiC autophosphorylation, while KaiB sequesters KaiA, leading to KaiC autodephosphorylation. Phospho-Ser-431 KaiC accumulation triggers binding of KaiB to form the KaiB(6):KaiC(6) complex, leading to changes in output regulators CikA and SasA. KaiB switches to a thioredoxin-like fold (KaiB(fs)) when bound to KaiC. KaiB(6):KaiC(6) formation exposes a site for KaiA binding that sequesters KaiA from KaiC, making the KaiC(6):KaiB(6):KaiA(12) complex that results in KaiC autodephosphorylation. Its function is as follows. A metamorphic protein which reversibly switches between an inactive tetrameric fold and a rare, thioredoxin-like monomeric fold (KaiB(fs)). KaiB(fs) binds phospho-KaiC, KaiA and CikA. KaiA and CikA compete for binding to KaiB(fs), and KaiB(fs) and SasA compete for binding to KaiC, thus the clock oscillator and output signal pathway are tightly coupled. The chain is Circadian clock oscillator protein KaiB from Cyanothece sp. (strain PCC 7425 / ATCC 29141).